A 602-amino-acid chain; its full sequence is Exo-poly-alpha-D-galacturonosidase (602 aa).

A signal peptide spans 1–27; that stretch reads MKVITFSRRSALASIVATCLMSTPALA. Residues 32–149 enclose the Fibronectin type-III domain; that stretch reads APQKLQIPTL…TVTTTTTAVP (118 aa). The active-site Proton donor is the Asp-395. Residue His-428 is part of the active site.

It belongs to the glycosyl hydrolase 28 family.

The protein localises to the secreted. It catalyses the reaction [(1-&gt;4)-alpha-D-galacturonosyl](n) + H2O = alpha-D-galacturonosyl-(1-&gt;4)-D-galacturonate + [(1-&gt;4)-alpha-D-galacturonosyl](n-2). In terms of biological role, contributes significantly to bacterial utilization of polygalacturonate and the induction of pectate lyase in the presence of extracellular pectic polymers. In Dickeya chrysanthemi (Pectobacterium chrysanthemi), this protein is Exo-poly-alpha-D-galacturonosidase (pehX).